We begin with the raw amino-acid sequence, 654 residues long: Fimbrin-2 (654 aa).

Calponin-homology (CH) domains lie at 124–241, 269–372, 394–500, and 515–623; these read DSEK…KIQL, LPPE…QHRN, SREE…RYNI, and EITD…YWTL. 2 actin-binding regions span residues 124-372 and 394-623; these read DSEK…QHRN and SREE…YWTL.

Interacts with F-actin.

It is found in the cytoplasm. Its subcellular location is the cytoskeleton. Its function is as follows. Cross-links actin filaments (F-actin). Stabilizes and prevents F-actin depolymerization mediated by profilin. May regulate actin cytoarchitecture, cell cycle, cell division, cell elongation and cytoplasmic tractus. The polypeptide is Fimbrin-2 (Arabidopsis thaliana (Mouse-ear cress)).